The sequence spans 363 residues: Adenosine deaminase (363 aa).

The residue at position 2 (alanine 2) is an N-acetylalanine. Residues histidine 15 and histidine 17 each contribute to the Zn(2+) site. Substrate-binding residues include histidine 17 and aspartate 19. Lysine 54 carries the N6-acetyllysine modification. Substrate is bound at residue glycine 184. Zn(2+) is bound at residue histidine 214. Glutamate 217 serves as the catalytic Proton donor. The residue at position 232 (lysine 232) is an N6-acetyllysine. Aspartate 295 serves as a coordination point for Zn(2+). Aspartate 296 is a binding site for substrate.

It belongs to the metallo-dependent hydrolases superfamily. Adenosine and AMP deaminases family. In terms of assembly, interacts with DPP4 (via extracellular domain). Interacts with PLG (via Kringle 4 domain); the interaction stimulates PLG activation when in complex with DPP4. Requires Zn(2+) as cofactor. Expressed in gastrointestinal tissues (at protein level).

Its subcellular location is the cell membrane. It localises to the cell junction. It is found in the cytoplasmic vesicle lumen. The protein resides in the cytoplasm. The protein localises to the lysosome. It carries out the reaction adenosine + H2O + H(+) = inosine + NH4(+). The catalysed reaction is 2'-deoxyadenosine + H2O + H(+) = 2'-deoxyinosine + NH4(+). The enzyme catalyses cordycepin + H2O + H(+) = 3'-deoxyinosine + NH4(+). Catalyzes the hydrolytic deamination of adenosine and 2-deoxyadenosine. Plays an important role in purine metabolism and in adenosine homeostasis. Modulates signaling by extracellular adenosine, and so contributes indirectly to cellular signaling events. Acts as a positive regulator of T-cell coactivation, by binding DPP4. Its interaction with DPP4 regulates lymphocyte-epithelial cell adhesion. Enhances dendritic cell immunogenicity by affecting dendritic cell costimulatory molecule expression and cytokines and chemokines secretion. Enhances CD4+ T-cell differentiation and proliferation. Acts as a positive modulator of adenosine receptors ADORA1 and ADORA2A, by enhancing their ligand affinity via conformational change. Stimulates plasminogen activation. Plays a role in male fertility. Plays a protective role in early postimplantation embryonic development. Also responsible for the deamination of cordycepin (3'-deoxyadenosine), a fungal natural product that shows antitumor, antibacterial, antifungal, antivirus, and immune regulation properties. This chain is Adenosine deaminase (ADA), found in Bos taurus (Bovine).